The chain runs to 158 residues: Phosphopantetheine adenylyltransferase (158 aa).

Residue Thr-10 coordinates substrate. ATP contacts are provided by residues 10 to 11 (TF) and His-18. Positions 42, 74, and 88 each coordinate substrate. ATP contacts are provided by residues 89–91 (GLR), Glu-99, and 124–130 (NSFISST).

It belongs to the bacterial CoaD family. As to quaternary structure, homohexamer. The cofactor is Mg(2+).

The protein resides in the cytoplasm. The catalysed reaction is (R)-4'-phosphopantetheine + ATP + H(+) = 3'-dephospho-CoA + diphosphate. It functions in the pathway cofactor biosynthesis; coenzyme A biosynthesis; CoA from (R)-pantothenate: step 4/5. Reversibly transfers an adenylyl group from ATP to 4'-phosphopantetheine, yielding dephospho-CoA (dPCoA) and pyrophosphate. The sequence is that of Phosphopantetheine adenylyltransferase from Shewanella loihica (strain ATCC BAA-1088 / PV-4).